The primary structure comprises 203 residues: FMN-dependent NADH:quinone oxidoreductase (203 aa).

FMN-binding positions include S9, S15–S17, and T139–G142.

The protein belongs to the azoreductase type 1 family. Homodimer. Requires FMN as cofactor.

The enzyme catalyses 2 a quinone + NADH + H(+) = 2 a 1,4-benzosemiquinone + NAD(+). It catalyses the reaction N,N-dimethyl-1,4-phenylenediamine + anthranilate + 2 NAD(+) = 2-(4-dimethylaminophenyl)diazenylbenzoate + 2 NADH + 2 H(+). Quinone reductase that provides resistance to thiol-specific stress caused by electrophilic quinones. In terms of biological role, also exhibits azoreductase activity. Catalyzes the reductive cleavage of the azo bond in aromatic azo compounds to the corresponding amines. In Albidiferax ferrireducens (strain ATCC BAA-621 / DSM 15236 / T118) (Rhodoferax ferrireducens), this protein is FMN-dependent NADH:quinone oxidoreductase.